A 551-amino-acid chain; its full sequence is Glucans biosynthesis protein D (551 aa).

A signal peptide (tat-type signal) is located at residues 1-32 (MDRRRFIKGSMAMAAVCGTSGIASLFSQAAFA).

Belongs to the OpgD/OpgG family. Predicted to be exported by the Tat system. The position of the signal peptide cleavage has not been experimentally proven.

It is found in the periplasm. Its pathway is glycan metabolism; osmoregulated periplasmic glucan (OPG) biosynthesis. Probably involved in the control of the structural glucose backbone of osmoregulated periplasmic glucans (OPGs). The protein is Glucans biosynthesis protein D of Escherichia coli (strain K12 / MC4100 / BW2952).